Reading from the N-terminus, the 373-residue chain is MSSTPHDPFYSSPFGPFYRRHTPYMVQPEYRIYEMNKRLQSRTEDSDNLWWDAFATEFFEDDATLTLSFCLEDGPKRYTIGRTLIPRYFSTVFEGGVTDLYYILKHSKESYHNSSITVDCDQCAMVTQHGKPMFTKVCTEGRLILEFTFDDLMRIKTWHFTIRQYRELVPRSILAMHAQDPQVLDQLSKNITRMGLTNFTLNYLRLCVILEPMQELMSRHKTYNLSPRDCLKTCLFQKWQRMVAPPAEPTRQPTTKRRKRKNSTSSTSNSSAGNTTNSAGSKKKTPAASLSLATQVPDVMVVGEPTLMGGEFGDEDERLITRLENTQYDAANGMDDEEDFNNSPALGNNSPWNSKPPATQETKSENAPPQASQ.

Disordered regions lie at residues 244–287 and 327–373; these read APPA…KTPA and QYDA…QASQ. The segment covering 263 to 280 has biased composition (low complexity); that stretch reads STSSTSNSSAGNTTNSAG. An LIM interaction domain (LID) domain is found at 298–337; that stretch reads DVMVVGEPTLMGGEFGDEDERLITRLENTQYDAANGMDDE. The segment covering 341-373 has biased composition (polar residues); the sequence is NNSPALGNNSPWNSKPPATQETKSENAPPQASQ.

This sequence belongs to the LDB family. As to quaternary structure, interacts with LHX9. Interacts with SLK; leading to negatively regulate SLK kinase activity. Interacts with LMO4. In terms of assembly, interacts with PITX1. Interacts with LHX3. In terms of processing, ubiquitinated by RLIM/RNF12, leading to its degradation by the proteasome. In terms of tissue distribution, expressed in multiple tissues including heart, brain, liver, kidney, testis, lung and muscle, with expression highest in the brain, trigeminal ganglia, and lung.

The protein resides in the nucleus. Transcription cofactor. Binds to the LIM domain of a wide variety of LIM domain-containing transcription factors. In terms of biological role, regulates the transcriptional activity of LIM-containing proteins such as LHX3 or PITX1. This chain is LIM domain-binding protein 2 (Ldb2), found in Mus musculus (Mouse).